The sequence spans 270 residues: Tryptophan synthase alpha chain (270 aa).

Catalysis depends on proton acceptor residues Glu50 and Asp61.

This sequence belongs to the TrpA family. In terms of assembly, tetramer of two alpha and two beta chains.

The catalysed reaction is (1S,2R)-1-C-(indol-3-yl)glycerol 3-phosphate + L-serine = D-glyceraldehyde 3-phosphate + L-tryptophan + H2O. The protein operates within amino-acid biosynthesis; L-tryptophan biosynthesis; L-tryptophan from chorismate: step 5/5. The alpha subunit is responsible for the aldol cleavage of indoleglycerol phosphate to indole and glyceraldehyde 3-phosphate. The sequence is that of Tryptophan synthase alpha chain from Chlorobium luteolum (strain DSM 273 / BCRC 81028 / 2530) (Pelodictyon luteolum).